The following is a 456-amino-acid chain: Bifunctional protein GlmU (456 aa).

Positions 1 to 229 (MSNSAMSVVI…LSEVEGVNNR (229 aa)) are pyrophosphorylase. Residues 11 to 14 (LAAG), Lys-25, Gln-76, 81 to 82 (GT), 103 to 105 (YGD), Gly-140, Glu-154, Asn-169, and Asn-227 contribute to the UDP-N-acetyl-alpha-D-glucosamine site. Asp-105 contributes to the Mg(2+) binding site. Asn-227 is a binding site for Mg(2+). The interval 230–250 (LQLSALERVYQREQADRLLLA) is linker. Residues 251 to 456 (GVMLLDPARF…SGWQRPVKKK (206 aa)) form an N-acetyltransferase region. UDP-N-acetyl-alpha-D-glucosamine-binding residues include Arg-333 and Lys-351. His-363 serves as the catalytic Proton acceptor. Residues Tyr-366 and Asn-377 each coordinate UDP-N-acetyl-alpha-D-glucosamine. Acetyl-CoA-binding positions include Ala-380, 386–387 (NY), Ser-405, Ala-423, and Arg-440.

In the N-terminal section; belongs to the N-acetylglucosamine-1-phosphate uridyltransferase family. This sequence in the C-terminal section; belongs to the transferase hexapeptide repeat family. In terms of assembly, homotrimer. Requires Mg(2+) as cofactor.

It localises to the cytoplasm. The enzyme catalyses alpha-D-glucosamine 1-phosphate + acetyl-CoA = N-acetyl-alpha-D-glucosamine 1-phosphate + CoA + H(+). It carries out the reaction N-acetyl-alpha-D-glucosamine 1-phosphate + UTP + H(+) = UDP-N-acetyl-alpha-D-glucosamine + diphosphate. Its pathway is nucleotide-sugar biosynthesis; UDP-N-acetyl-alpha-D-glucosamine biosynthesis; N-acetyl-alpha-D-glucosamine 1-phosphate from alpha-D-glucosamine 6-phosphate (route II): step 2/2. It functions in the pathway nucleotide-sugar biosynthesis; UDP-N-acetyl-alpha-D-glucosamine biosynthesis; UDP-N-acetyl-alpha-D-glucosamine from N-acetyl-alpha-D-glucosamine 1-phosphate: step 1/1. The protein operates within bacterial outer membrane biogenesis; LPS lipid A biosynthesis. Its function is as follows. Catalyzes the last two sequential reactions in the de novo biosynthetic pathway for UDP-N-acetylglucosamine (UDP-GlcNAc). The C-terminal domain catalyzes the transfer of acetyl group from acetyl coenzyme A to glucosamine-1-phosphate (GlcN-1-P) to produce N-acetylglucosamine-1-phosphate (GlcNAc-1-P), which is converted into UDP-GlcNAc by the transfer of uridine 5-monophosphate (from uridine 5-triphosphate), a reaction catalyzed by the N-terminal domain. The protein is Bifunctional protein GlmU of Pectobacterium carotovorum subsp. carotovorum (strain PC1).